The chain runs to 40 residues: Putative NAD(P)-dependent glyceraldehyde-3-phosphate dehydrogenase PS5 (40 aa).

The chain is Putative NAD(P)-dependent glyceraldehyde-3-phosphate dehydrogenase PS5 from Pinus strobus (Eastern white pine).